The following is a 123-amino-acid chain: Ribosome-binding factor A (123 aa).

This sequence belongs to the RbfA family. Monomer. Binds 30S ribosomal subunits, but not 50S ribosomal subunits or 70S ribosomes.

The protein localises to the cytoplasm. In terms of biological role, one of several proteins that assist in the late maturation steps of the functional core of the 30S ribosomal subunit. Associates with free 30S ribosomal subunits (but not with 30S subunits that are part of 70S ribosomes or polysomes). Required for efficient processing of 16S rRNA. May interact with the 5'-terminal helix region of 16S rRNA. The protein is Ribosome-binding factor A of Desulfatibacillum aliphaticivorans.